Here is a 193-residue protein sequence, read N- to C-terminus: Acyl carrier protein phosphodiesterase (193 aa).

This sequence belongs to the AcpH family.

It catalyses the reaction holo-[ACP] + H2O = apo-[ACP] + (R)-4'-phosphopantetheine + H(+). Functionally, converts holo-ACP to apo-ACP by hydrolytic cleavage of the phosphopantetheine prosthetic group from ACP. This Shigella boydii serotype 18 (strain CDC 3083-94 / BS512) protein is Acyl carrier protein phosphodiesterase.